The following is a 409-amino-acid chain: Elongation factor Tu (409 aa).

Residues 10-214 (KPHVNIGTIG…EVDGYIPQPE (205 aa)) enclose the tr-type G domain. Residues 19–26 (GHVDHGKT) are G1. 19–26 (GHVDHGKT) is a binding site for GTP. Residue Thr26 participates in Mg(2+) binding. A G2 region spans residues 60–64 (GITIN). Residues 81–84 (DCPG) form a G3 region. Residues 81–85 (DCPGH) and 136–139 (NKQD) contribute to the GTP site. Positions 136 to 139 (NKQD) are G4. A G5 region spans residues 174 to 176 (SAL).

The protein belongs to the TRAFAC class translation factor GTPase superfamily. Classic translation factor GTPase family. EF-Tu/EF-1A subfamily. Monomer.

The protein resides in the cytoplasm. It carries out the reaction GTP + H2O = GDP + phosphate + H(+). Functionally, GTP hydrolase that promotes the GTP-dependent binding of aminoacyl-tRNA to the A-site of ribosomes during protein biosynthesis. In Trichodesmium erythraeum (strain IMS101), this protein is Elongation factor Tu.